The primary structure comprises 68 residues: uncharacterized protein (68 aa).

In terms of domain architecture, HMA spans 2–67 (KTITLNIKGI…VIEDAGFDAT (66 aa)). Residues cysteine 13 and cysteine 16 each coordinate a metal cation.

This is an uncharacterized protein from Haemophilus influenzae (strain ATCC 51907 / DSM 11121 / KW20 / Rd).